The following is a 207-amino-acid chain: dITP/XTP pyrophosphatase (207 aa).

S16 to K21 is a binding site for substrate. D79 functions as the Proton acceptor in the catalytic mechanism. Position 79 (D79) interacts with Mg(2+). Residues S80, F166–D169, K189, and H194–R195 contribute to the substrate site.

This sequence belongs to the HAM1 NTPase family. In terms of assembly, homodimer. It depends on Mg(2+) as a cofactor.

It carries out the reaction XTP + H2O = XMP + diphosphate + H(+). The enzyme catalyses dITP + H2O = dIMP + diphosphate + H(+). The catalysed reaction is ITP + H2O = IMP + diphosphate + H(+). Functionally, pyrophosphatase that catalyzes the hydrolysis of nucleoside triphosphates to their monophosphate derivatives, with a high preference for the non-canonical purine nucleotides XTP (xanthosine triphosphate), dITP (deoxyinosine triphosphate) and ITP. Seems to function as a house-cleaning enzyme that removes non-canonical purine nucleotides from the nucleotide pool, thus preventing their incorporation into DNA/RNA and avoiding chromosomal lesions. In Acinetobacter baumannii (strain ATCC 17978 / DSM 105126 / CIP 53.77 / LMG 1025 / NCDC KC755 / 5377), this protein is dITP/XTP pyrophosphatase.